The primary structure comprises 204 residues: Nascent polypeptide-associated complex subunit alpha (204 aa).

Basic and acidic residues predominate over residues 1–19; it reads MADPRVEELPDEEVPKANV. 2 disordered regions span residues 1–47 and 118–167; these read MADP…IHSR and QLAA…GLEA. The span at 22–32 shows a compositional bias: acidic residues; it reads AGSDSESEAGE. The NAC-A/B domain occupies 46 to 111; that stretch reads SRNEKKARKA…AKIEDLNSQA (66 aa). Residues 118–128 are compositionally biased toward low complexity; it reads QLAAAEAAAGE. Basic and acidic residues predominate over residues 129–151; the sequence is HAGHDHDHDHGKGKAPETEAKKE. Over residues 152–164 the composition is skewed to acidic residues; sequence EEEDDGEEVDETG. Residues 165–204 form the UBA domain; sequence LEAKDIELVMAQANVSRKKAVKALRENDNDIVNSIMALSI.

This sequence belongs to the NAC-alpha family. In terms of assembly, part of the nascent polypeptide-associated complex (NAC), consisting of egd2 and egd1. NAC associates with ribosomes via egd1.

The protein localises to the cytoplasm. Its subcellular location is the nucleus. Its function is as follows. Component of the nascent polypeptide-associated complex (NAC), a dynamic component of the ribosomal exit tunnel, protecting the emerging polypeptides from interaction with other cytoplasmic proteins to ensure appropriate nascent protein targeting. The NAC complex also promotes mitochondrial protein import by enhancing productive ribosome interactions with the outer mitochondrial membrane and blocks the inappropriate interaction of ribosomes translating non-secretory nascent polypeptides with translocation sites in the membrane of the endoplasmic reticulum. Egd2 may also be involved in transcription regulation. The chain is Nascent polypeptide-associated complex subunit alpha (egd2) from Aspergillus fumigatus (strain ATCC MYA-4609 / CBS 101355 / FGSC A1100 / Af293) (Neosartorya fumigata).